Here is a 506-residue protein sequence, read N- to C-terminus: Glutamate--tRNA ligase (506 aa).

The 'HIGH' region motif lies at 24-34 (PSPTGTPHVGL). The interval 124 to 147 (TPEEVEQRHRAKGEDPKRGYDNYD) is disordered. The span at 128-147 (VEQRHRAKGEDPKRGYDNYD) shows a compositional bias: basic and acidic residues. The short motif at 268 to 272 (KLSKR) is the 'KMSKS' region element. Lys271 contacts ATP.

Belongs to the class-I aminoacyl-tRNA synthetase family. Glutamate--tRNA ligase type 1 subfamily. As to quaternary structure, monomer.

The protein resides in the cytoplasm. It catalyses the reaction tRNA(Glu) + L-glutamate + ATP = L-glutamyl-tRNA(Glu) + AMP + diphosphate. Catalyzes the attachment of glutamate to tRNA(Glu) in a two-step reaction: glutamate is first activated by ATP to form Glu-AMP and then transferred to the acceptor end of tRNA(Glu). The polypeptide is Glutamate--tRNA ligase (Kocuria rhizophila (strain ATCC 9341 / DSM 348 / NBRC 103217 / DC2201)).